The following is an 811-amino-acid chain: Capsid protein VP1 (811 aa).

The disordered stretch occupies residues D321–T367. Over residues T346 to T366 the composition is skewed to polar residues.

The protein resides in the virion. Its function is as follows. Capsid protein self-assembles to form an icosahedral capsid with a T=1 symmetry, about 22 nm in diameter, and consisting of 60 copies of size variants of the capsid proteins, which differ in the N-terminushe capsid encapsulates the genomic ssDNA. Capsid proteins are responsible for the attachment to host cell receptors. This attachment induces virion internalization predominantly through clathrin-dependent endocytosis. This is Capsid protein VP1 (VP) from Galleria mellonella densovirus (GmDNV).